We begin with the raw amino-acid sequence, 195 residues long: Thymidylate kinase (195 aa).

Residue 7 to 14 coordinates ATP; the sequence is GIDGSGKT.

It belongs to the thymidylate kinase family.

It catalyses the reaction dTMP + ATP = dTDP + ADP. In terms of biological role, phosphorylation of dTMP to form dTDP in both de novo and salvage pathways of dTTP synthesis. This Aquifex aeolicus (strain VF5) protein is Thymidylate kinase (tmk).